The sequence spans 106 residues: uncharacterized protein (106 aa).

The first 22 residues, 1–22, serve as a signal peptide directing secretion; the sequence is MKKHPNLLLGFSVYLSAGTKLT. Residues 23–46 are disordered; sequence IPPEAEQHTAPSDNNKRKRAKCDD.

This is an uncharacterized protein from Arabidopsis thaliana (Mouse-ear cress).